Consider the following 368-residue polypeptide: 1-aminocyclopropane-1-carboxylate oxidase (368 aa).

One can recognise a Fe2OG dioxygenase domain in the interval 177-307; it reads PFILMGLLHY…RFSIPFFLDP (131 aa). The tract at residues 191 to 226 is disordered; it reads HQEQEEEQEDDESNNGGKKSPNPDESKKPEVEKFGT. Residues 194–203 show a composition bias toward acidic residues; the sequence is QEEEQEDDES. The segment covering 211-223 has biased composition (basic and acidic residues); sequence PNPDESKKPEVEK. Fe cation is bound by residues His-229, Asp-231, and His-287. Arg-298 is a binding site for 2-oxoglutarate.

It belongs to the iron/ascorbate-dependent oxidoreductase family. Requires Fe(2+) as cofactor.

It catalyses the reaction 1-aminocyclopropane-1-carboxylate + L-ascorbate + O2 = ethene + L-dehydroascorbate + hydrogen cyanide + CO2 + 2 H2O. Its pathway is alkene biosynthesis; ethylene biosynthesis via S-adenosyl-L-methionine; ethylene from S-adenosyl-L-methionine: step 2/2. Involved in ethylene biosynthesis. Overexpression induces overproduction of ethylene. The chain is 1-aminocyclopropane-1-carboxylate oxidase (aco) from Dictyostelium discoideum (Social amoeba).